The primary structure comprises 268 residues: L-aspartate dehydrogenase (268 aa).

Positions 125 and 191 each coordinate NAD(+). Residue His-221 is part of the active site.

The protein belongs to the L-aspartate dehydrogenase family.

The enzyme catalyses L-aspartate + NADP(+) + H2O = oxaloacetate + NH4(+) + NADPH + H(+). It catalyses the reaction L-aspartate + NAD(+) + H2O = oxaloacetate + NH4(+) + NADH + H(+). The protein operates within cofactor biosynthesis; NAD(+) biosynthesis; iminoaspartate from L-aspartate (dehydrogenase route): step 1/1. Specifically catalyzes the NAD or NADP-dependent dehydrogenation of L-aspartate to iminoaspartate. This chain is L-aspartate dehydrogenase, found in Brucella anthropi (strain ATCC 49188 / DSM 6882 / CCUG 24695 / JCM 21032 / LMG 3331 / NBRC 15819 / NCTC 12168 / Alc 37) (Ochrobactrum anthropi).